The following is a 610-amino-acid chain: MPSGFNAKSFLKNVTSAPGVYRMYDKHQQVIYVGKAKDLKKRLSSYFRVNIANVKTQALVSHIDHIDVTVTHSETDALLLENDYIKQYMPKYNVLLRDDKSYPYILLSGHKHPRLAYHRGPKREKGHYFGPYPNGGAVRESLHLIQKLFPIRQCDDLYYKSRSRPCLQYQLDRCSAPCVGIVSDDEYSEQVKLAGLFLRGKDKQVISQLVAKMETAAIDMEYERAAQYRDQITALRRVAEQQEVSNHKGDMDVIGVDYASGIACFHLLFIRDGKIFGSRSYYPSVPAETEIEEVLSSFLGQFYLNADIQRTIPKEVILSHHFDGITELQASIEHALDKKFELKTQVRGDRANFLRLAMTNASNAVATKLSHKNTVEQRFQLLEEALELNEPIKRMECFDISHTMGESTVASCVVFNREGPHKADYRRYNITGITGGDDYAAMEQAISRRFDKIDNNGKVPDLVFIDGGIGQLRVAQTIVDEKCVNIDHPPLLICVTKGEGRKAGLETFTVGGSEQTFEVASDSPAFHLMLHIRDESHRFAITGHRNKRQKTRNTSTLESIAGVGPKRRKALLQHLGGIQEVKGASVAELTKVPGISLEMAQTIHDALRGG.

One can recognise a GIY-YIG domain in the interval 16–94; it reads SAPGVYRMYD…IKQYMPKYNV (79 aa). One can recognise a UVR domain in the interval 203–238; it reads KQVISQLVAKMETAAIDMEYERAAQYRDQITALRRV.

Belongs to the UvrC family. As to quaternary structure, interacts with UvrB in an incision complex.

The protein localises to the cytoplasm. The UvrABC repair system catalyzes the recognition and processing of DNA lesions. UvrC both incises the 5' and 3' sides of the lesion. The N-terminal half is responsible for the 3' incision and the C-terminal half is responsible for the 5' incision. The protein is UvrABC system protein C of Shewanella frigidimarina (strain NCIMB 400).